The following is a 238-amino-acid chain: Purine nucleoside phosphorylase DeoD-type (238 aa).

Residue His5 participates in a purine D-ribonucleoside binding. Phosphate contacts are provided by residues Gly21, Arg25, Arg44, and Arg88–Ser91. Residues Glu180–Glu182 and Ser204–Asp205 contribute to the a purine D-ribonucleoside site. The active-site Proton donor is Asp205.

This sequence belongs to the PNP/UDP phosphorylase family. Homohexamer; trimer of homodimers.

It catalyses the reaction a purine D-ribonucleoside + phosphate = a purine nucleobase + alpha-D-ribose 1-phosphate. The catalysed reaction is a purine 2'-deoxy-D-ribonucleoside + phosphate = a purine nucleobase + 2-deoxy-alpha-D-ribose 1-phosphate. Functionally, catalyzes the reversible phosphorolytic breakdown of the N-glycosidic bond in the beta-(deoxy)ribonucleoside molecules, with the formation of the corresponding free purine bases and pentose-1-phosphate. The chain is Purine nucleoside phosphorylase DeoD-type from Photorhabdus laumondii subsp. laumondii (strain DSM 15139 / CIP 105565 / TT01) (Photorhabdus luminescens subsp. laumondii).